The sequence spans 352 residues: Phosphate acyltransferase (352 aa).

The protein belongs to the PlsX family. In terms of assembly, homodimer. Probably interacts with PlsY.

It localises to the cytoplasm. The enzyme catalyses a fatty acyl-[ACP] + phosphate = an acyl phosphate + holo-[ACP]. The protein operates within lipid metabolism; phospholipid metabolism. Catalyzes the reversible formation of acyl-phosphate (acyl-PO(4)) from acyl-[acyl-carrier-protein] (acyl-ACP). This enzyme utilizes acyl-ACP as fatty acyl donor, but not acyl-CoA. The protein is Phosphate acyltransferase of Brucella anthropi (strain ATCC 49188 / DSM 6882 / CCUG 24695 / JCM 21032 / LMG 3331 / NBRC 15819 / NCTC 12168 / Alc 37) (Ochrobactrum anthropi).